The primary structure comprises 154 residues: Ubiquitin-like protein 4A-A (154 aa).

A Ubiquitin-like domain is found at 1 to 76; that stretch reads MILTVKPLQG…LNLVVRPAGE (76 aa).

As to quaternary structure, component of the BAT3 complex.

Its subcellular location is the cytoplasm. The protein localises to the cytosol. In terms of biological role, component of the BAT3 complex, a multiprotein complex involved in the post-translational delivery of tail-anchored (TA) membrane proteins to the endoplasmic reticulum membrane. TA membrane proteins, also named type II transmembrane proteins, contain a single C-terminal transmembrane region. The polypeptide is Ubiquitin-like protein 4A-A (ubl4aa) (Oncorhynchus mykiss (Rainbow trout)).